Consider the following 274-residue polypeptide: Proteasome subunit beta (274 aa).

Positions 1 to 52 (MADPMGGAGRLPAVFMTPGTSSFTDFLSQSAPHLLPGARGGLPGPVTEVAHG) are cleaved as a propeptide — removed in mature form; by autocatalysis. T53 functions as the Nucleophile in the catalytic mechanism.

It belongs to the peptidase T1B family. In terms of assembly, the 20S proteasome core is composed of 14 alpha and 14 beta subunits that assemble into four stacked heptameric rings, resulting in a barrel-shaped structure. The two inner rings, each composed of seven catalytic beta subunits, are sandwiched by two outer rings, each composed of seven alpha subunits. The catalytic chamber with the active sites is on the inside of the barrel. Has a gated structure, the ends of the cylinder being occluded by the N-termini of the alpha-subunits. Is capped by the proteasome-associated ATPase, ARC.

Its subcellular location is the cytoplasm. The enzyme catalyses Cleavage of peptide bonds with very broad specificity.. It functions in the pathway protein degradation; proteasomal Pup-dependent pathway. The formation of the proteasomal ATPase ARC-20S proteasome complex, likely via the docking of the C-termini of ARC into the intersubunit pockets in the alpha-rings, may trigger opening of the gate for substrate entry. Interconversion between the open-gate and close-gate conformations leads to a dynamic regulation of the 20S proteasome proteolysis activity. Its function is as follows. Component of the proteasome core, a large protease complex with broad specificity involved in protein degradation. This chain is Proteasome subunit beta, found in Frankia alni (strain DSM 45986 / CECT 9034 / ACN14a).